Here is a 466-residue protein sequence, read N- to C-terminus: 3-isopropylmalate dehydratase large subunit (466 aa).

Residues Cys-345, Cys-405, and Cys-408 each coordinate [4Fe-4S] cluster.

It belongs to the aconitase/IPM isomerase family. LeuC type 1 subfamily. Heterodimer of LeuC and LeuD. Requires [4Fe-4S] cluster as cofactor.

It carries out the reaction (2R,3S)-3-isopropylmalate = (2S)-2-isopropylmalate. The protein operates within amino-acid biosynthesis; L-leucine biosynthesis; L-leucine from 3-methyl-2-oxobutanoate: step 2/4. Functionally, catalyzes the isomerization between 2-isopropylmalate and 3-isopropylmalate, via the formation of 2-isopropylmaleate. The polypeptide is 3-isopropylmalate dehydratase large subunit (Microcystis aeruginosa (strain NIES-843 / IAM M-2473)).